A 455-amino-acid polypeptide reads, in one-letter code: Trigger factor (455 aa).

Residues 169-262 (GDVAIVDYEG…VKELKAKELP (94 aa)) form the PPIase FKBP-type domain.

It belongs to the FKBP-type PPIase family. Tig subfamily.

It localises to the cytoplasm. It carries out the reaction [protein]-peptidylproline (omega=180) = [protein]-peptidylproline (omega=0). In terms of biological role, involved in protein export. Acts as a chaperone by maintaining the newly synthesized protein in an open conformation. Functions as a peptidyl-prolyl cis-trans isomerase. This Rippkaea orientalis (strain PCC 8801 / RF-1) (Cyanothece sp. (strain PCC 8801)) protein is Trigger factor.